Consider the following 273-residue polypeptide: Putative pyruvate, phosphate dikinase regulatory protein (273 aa).

149-156 contributes to the ADP binding site; that stretch reads GPSRTSKT.

The protein belongs to the pyruvate, phosphate/water dikinase regulatory protein family. PDRP subfamily.

The catalysed reaction is N(tele)-phospho-L-histidyl/L-threonyl-[pyruvate, phosphate dikinase] + ADP = N(tele)-phospho-L-histidyl/O-phospho-L-threonyl-[pyruvate, phosphate dikinase] + AMP + H(+). It carries out the reaction N(tele)-phospho-L-histidyl/O-phospho-L-threonyl-[pyruvate, phosphate dikinase] + phosphate + H(+) = N(tele)-phospho-L-histidyl/L-threonyl-[pyruvate, phosphate dikinase] + diphosphate. Bifunctional serine/threonine kinase and phosphorylase involved in the regulation of the pyruvate, phosphate dikinase (PPDK) by catalyzing its phosphorylation/dephosphorylation. This chain is Putative pyruvate, phosphate dikinase regulatory protein, found in Rickettsia akari (strain Hartford).